A 289-amino-acid polypeptide reads, in one-letter code: MEEGADSVKLYDQNNTLSERHIKADKNADERVPDQMWLRCPHCHQLLFAKQLTQYAVCPNCDYGLRIPARHRLSWLVDSFKEFDKDLQTKNPLHFPGYQEKISKLQRQTKLNDSVLTGEASINDQLFSLGIMDPTFIMGSLGTVTGEKITRLFEYATTHRQAVVLFTASGGARMQEGIMSLMQMAKVSQAINEHAAAGLLYIVVLTDPTTGGVTASFAMDGDIILAEPHALVGFAGRRVIEQTIHQQIPIDLQSAENILHHGFIDRIVKRQDEKKLLEWLLKTGSVANE.

The region spanning 36–289 (MWLRCPHCHQ…LLKTGSVANE (254 aa)) is the CoA carboxyltransferase N-terminal domain. Cys-40, Cys-43, Cys-58, and Cys-61 together coordinate Zn(2+). Residues 40–61 (CPHCHQLLFAKQLTQYAVCPNC) form a C4-type zinc finger.

The protein belongs to the AccD/PCCB family. As to quaternary structure, acetyl-CoA carboxylase is a heterohexamer composed of biotin carboxyl carrier protein (AccB), biotin carboxylase (AccC) and two subunits each of ACCase subunit alpha (AccA) and ACCase subunit beta (AccD). Zn(2+) serves as cofactor.

It is found in the cytoplasm. The catalysed reaction is N(6)-carboxybiotinyl-L-lysyl-[protein] + acetyl-CoA = N(6)-biotinyl-L-lysyl-[protein] + malonyl-CoA. The protein operates within lipid metabolism; malonyl-CoA biosynthesis; malonyl-CoA from acetyl-CoA: step 1/1. Component of the acetyl coenzyme A carboxylase (ACC) complex. Biotin carboxylase (BC) catalyzes the carboxylation of biotin on its carrier protein (BCCP) and then the CO(2) group is transferred by the transcarboxylase to acetyl-CoA to form malonyl-CoA. This chain is Acetyl-coenzyme A carboxylase carboxyl transferase subunit beta, found in Limosilactobacillus reuteri subsp. reuteri (strain JCM 1112) (Lactobacillus reuteri).